A 232-amino-acid chain; its full sequence is Peptide deformylase (232 aa).

Fe cation contacts are provided by Cys-135 and His-178. Residue Glu-179 is part of the active site. His-182 lines the Fe cation pocket.

The protein belongs to the polypeptide deformylase family. Requires Fe(2+) as cofactor.

The enzyme catalyses N-terminal N-formyl-L-methionyl-[peptide] + H2O = N-terminal L-methionyl-[peptide] + formate. Its function is as follows. Removes the formyl group from the N-terminal Met of newly synthesized proteins. Requires at least a dipeptide for an efficient rate of reaction. N-terminal L-methionine is a prerequisite for activity but the enzyme has broad specificity at other positions. This chain is Peptide deformylase, found in Deinococcus radiodurans (strain ATCC 13939 / DSM 20539 / JCM 16871 / CCUG 27074 / LMG 4051 / NBRC 15346 / NCIMB 9279 / VKM B-1422 / R1).